Reading from the N-terminus, the 305-residue chain is Protein EXORDIUM-like 2 (305 aa).

Positions 1-23 are cleaved as a signal peptide; that stretch reads MASNYRFAIFLTLFFATAGFSAA. An N-linked (GlcNAc...) asparagine glycan is attached at asparagine 44.

This sequence belongs to the EXORDIUM family.

Its subcellular location is the secreted. The protein localises to the extracellular space. It localises to the apoplast. Functionally, may play a role in a brassinosteroid-dependent regulation of growth and development. This Arabidopsis thaliana (Mouse-ear cress) protein is Protein EXORDIUM-like 2 (EXL2).